We begin with the raw amino-acid sequence, 344 residues long: Melanocyte-stimulating hormone receptor (344 aa).

Residues 1 to 37 (MPMQGAQRKLLGSLNSTPTATSNPGLAANHTGAPCLE) are Extracellular-facing. The N-linked (GlcNAc...) asparagine glycan is linked to Asn29. A helical transmembrane segment spans residues 38–63 (VSIPDGLFLSLGLVSLVENVLVVAAI). Residues 64–72 (AKNRNLHSS) lie on the Cytoplasmic side of the membrane. Residues 73–93 (MYYFICCLALSDLLVSGSNML) traverse the membrane as a helical segment. Over 94 to 118 (ETAIILLLEAGTLATRASVVQQLHN) the chain is Extracellular. Residues 119 to 140 (TIDVLTCSSMLCSLCFLGAIAV) form a helical membrane-spanning segment. The Cytoplasmic segment spans residues 141–163 (DRYISIFYALRYHSIMTLPRAQR). The helical transmembrane segment at 164–183 (AIAAIWVASVLSSTLFITYY) threads the bilayer. At 184–191 (DHAAVLLC) the chain is on the extracellular side. Residues 192–211 (LVVFFLAMLVLMAVLYVHML) traverse the membrane as a helical segment. Over 212–240 (ARACQHAQGIIRLHNRQLPAHKGFGLRGA) the chain is Cytoplasmic. The chain crosses the membrane as a helical span at residues 241 to 266 (ATLTILLGIFFLCWGPFFLHLTLVVF). Over 267-279 (CPQHLTCNCIFKN) the chain is Extracellular. A helical membrane pass occupies residues 280 to 300 (FKVFLTLIICNTIIDPLIYAF). Residues 301 to 344 (RSQELRRTLKEVLLCSSWPGCWAEGGGDSVWPGSCVTLRGPLPP) lie on the Cytoplasmic side of the membrane. The S-palmitoyl cysteine moiety is linked to residue Cys315.

Belongs to the G-protein coupled receptor 1 family. Interacts with MGRN1, but does not undergo MGRN1-mediated ubiquitination; this interaction competes with GNAS-binding and thus inhibits agonist-induced cAMP production. Interacts with OPN3; the interaction results in a decrease in MC1R-mediated cAMP signaling and ultimately a decrease in melanin production in melanocytes.

The protein resides in the cell membrane. Functionally, receptor for MSH (alpha, beta and gamma) and ACTH. The activity of this receptor is mediated by G proteins which activate adenylate cyclase. Mediates melanogenesis, the production of eumelanin (black/brown) and phaeomelanin (red/yellow), via regulation of cAMP signaling in melanocytes. The chain is Melanocyte-stimulating hormone receptor (MC1R) from Callithrix jacchus (White-tufted-ear marmoset).